The following is a 325-amino-acid chain: ATP synthase gamma chain (325 aa).

It belongs to the ATPase gamma chain family. F-type ATPases have 2 components, CF(1) - the catalytic core - and CF(0) - the membrane proton channel. CF(1) has five subunits: alpha(3), beta(3), gamma(1), delta(1), epsilon(1). CF(0) has three main subunits: a, b and c.

The protein localises to the cell membrane. Functionally, produces ATP from ADP in the presence of a proton gradient across the membrane. The gamma chain is believed to be important in regulating ATPase activity and the flow of protons through the CF(0) complex. This chain is ATP synthase gamma chain, found in Corynebacterium glutamicum (strain ATCC 13032 / DSM 20300 / JCM 1318 / BCRC 11384 / CCUG 27702 / LMG 3730 / NBRC 12168 / NCIMB 10025 / NRRL B-2784 / 534).